The chain runs to 247 residues: Uridylate kinase (247 aa).

15–18 contacts ATP; that stretch reads KLSG. The tract at residues 23 to 28 is involved in allosteric activation by GTP; the sequence is GDEGFG. Gly-57 provides a ligand contact to UMP. 2 residues coordinate ATP: Gly-58 and Arg-62. UMP contacts are provided by residues Asp-77 and 138–145; that span reads TGNPFFTT. ATP contacts are provided by Thr-165, Tyr-171, and Asp-174.

This sequence belongs to the UMP kinase family. Homohexamer.

It is found in the cytoplasm. The catalysed reaction is UMP + ATP = UDP + ADP. Its pathway is pyrimidine metabolism; CTP biosynthesis via de novo pathway; UDP from UMP (UMPK route): step 1/1. With respect to regulation, allosterically activated by GTP. Inhibited by UTP. In terms of biological role, catalyzes the reversible phosphorylation of UMP to UDP. This chain is Uridylate kinase, found in Saccharophagus degradans (strain 2-40 / ATCC 43961 / DSM 17024).